A 238-amino-acid polypeptide reads, in one-letter code: Small ribosomal subunit protein uS2 (238 aa).

Belongs to the universal ribosomal protein uS2 family.

In Actinobacillus pleuropneumoniae serotype 7 (strain AP76), this protein is Small ribosomal subunit protein uS2.